The primary structure comprises 329 residues: MEGLRRLLGLLLVLYRLCSALGKNLEPVTWNSQNPRFISGKGLVLYPEIGDRLDIICPKGDSSQPYEYYKLYMVRRDQLEACSTVIDPNVLVTCNQPGKEYRFTIKFQEFSPNYMGLEFRRNQDYYITSTSNSTLQGLENREGGVCQTRSMKIIMKVGQDPNAVPPEQLTTTRPSKEADNTGKIATFGPWNGPVENPGKSDTNLSDKPTAGGGVDGFFNSKIAVFAAIGAGCVIFILIIIFLVVLLIKIRKRHRKHTQQRAAALSLSTLASPKCSGNAGSEPSDIIIPLRTTENNYCPHYEKVSGDYGHPVYIVQEMPPQSPANIYYKV.

The first 20 residues, 1-20, serve as a signal peptide directing secretion; the sequence is MEGLRRLLGLLLVLYRLCSA. Residues 21–226 lie on the Extracellular side of the membrane; the sequence is LGKNLEPVTW…FFNSKIAVFA (206 aa). The region spanning 23 to 157 is the Ephrin RBD domain; that stretch reads KNLEPVTWNS…TRSMKIIMKV (135 aa). Cystine bridges form between Cys57–Cys94 and Cys82–Cys146. N-linked (GlcNAc...) asparagine glycosylation occurs at Asn132. Positions 163-192 are disordered; the sequence is AVPPEQLTTTRPSKEADNTGKIATFGPWNG. Asn203 carries N-linked (GlcNAc...) asparagine glycosylation. Residues 227 to 247 form a helical membrane-spanning segment; the sequence is AIGAGCVIFILIIIFLVVLLI. Residues 248–329 lie on the Cytoplasmic side of the membrane; sequence KIRKRHRKHT…QSPANIYYKV (82 aa). The PDZ-binding signature appears at 327–329; sequence YKV.

It belongs to the ephrin family. Interacts with TLE4 through the PDZ-binding motif. Inducible phosphorylation of tyrosine residues in the cytoplasmic domain. Tyrosine phosphorylation inhibits TLE4-binding. Expressed at low levels in most tissues with highest levels in the kidney, oocytes, ovary and testis.

The protein localises to the membrane. Its function is as follows. Cell surface transmembrane ligand for Eph receptors, a family of receptor tyrosine kinases which are crucial for migration, repulsion and adhesion during neuronal, vascular and epithelial development. Binds promiscuously Eph receptors residing on adjacent cells, leading to contact-dependent bidirectional signaling into neighboring cells. The signaling pathway downstream of the receptor is referred to as forward signaling while the signaling pathway downstream of the ephrin ligand is referred to as reverse signaling. May have a role in the developing mesenchymal and nervous tissue. The chain is Ephrin-B1 (efnb1) from Xenopus laevis (African clawed frog).